A 383-amino-acid chain; its full sequence is Aurachin C monooxygenase/isomerase (383 aa).

FAD-binding positions include glycine 15, serine 47, valine 128, aspartate 285, and 295–299 (GQGGC).

Requires FAD as cofactor.

The catalysed reaction is aurachin C + NADH + O2 + H(+) = 4-hydroxy-2-methyl-3-oxo-4-[(2E,6E)-farnesyl]-3,4-dihydroquinoline 1-oxide + NAD(+) + H2O. It catalyses the reaction aurachin C + NADPH + O2 + H(+) = 4-hydroxy-2-methyl-3-oxo-4-[(2E,6E)-farnesyl]-3,4-dihydroquinoline 1-oxide + NADP(+) + H2O. The enzyme catalyses aurachin C + NADH + O2 + H(+) = aurachin C epoxide + NAD(+) + H2O. It carries out the reaction aurachin C + NADPH + O2 + H(+) = aurachin C epoxide + NADP(+) + H2O. The catalysed reaction is aurachin C epoxide = 2-hydroxy-1a-methyl-7a-[(2E,6E)-farnesyl]-1a,2-dihydrooxireno[2,3-b]quinolin-7(7aH)-one. It catalyses the reaction 2-hydroxy-1a-methyl-7a-[(2E,6E)-farnesyl]-1a,2-dihydrooxireno[2,3-b]quinolin-7(7aH)-one = 4-hydroxy-2-methyl-3-oxo-4-[(2E,6E)-farnesyl]-3,4-dihydroquinoline 1-oxide. Functionally, catalyzes the initial step in the conversion of aurachin C to aurachin B. Catalyzes the epoxidation of the C(2)-C(3) double bond of aurachin C, which is followed by a semipinacol rearrangement, causing migration of the farnesyl group from C(3) to C(4). Accepts both NADH and NADPH, but has a preference for NADH. This is Aurachin C monooxygenase/isomerase from Stigmatella aurantiaca.